Consider the following 354-residue polypeptide: Ferrochelatase (354 aa).

Residues His214 and Glu295 each coordinate Fe cation.

This sequence belongs to the ferrochelatase family.

It localises to the cytoplasm. It catalyses the reaction heme b + 2 H(+) = protoporphyrin IX + Fe(2+). The protein operates within porphyrin-containing compound metabolism; protoheme biosynthesis; protoheme from protoporphyrin-IX: step 1/1. Functionally, catalyzes the ferrous insertion into protoporphyrin IX. This is Ferrochelatase from Burkholderia orbicola (strain AU 1054).